Reading from the N-terminus, the 173-residue chain is NADH-quinone oxidoreductase subunit B 1 (173 aa).

The [4Fe-4S] cluster site is built by Cys42, Cys43, Cys107, and Cys137.

The protein belongs to the complex I 20 kDa subunit family. As to quaternary structure, NDH-1 is composed of 14 different subunits. Subunits NuoB, C, D, E, F, and G constitute the peripheral sector of the complex. [4Fe-4S] cluster serves as cofactor.

It localises to the cell inner membrane. It catalyses the reaction a quinone + NADH + 5 H(+)(in) = a quinol + NAD(+) + 4 H(+)(out). NDH-1 shuttles electrons from NADH, via FMN and iron-sulfur (Fe-S) centers, to quinones in the respiratory chain. The immediate electron acceptor for the enzyme in this species is believed to be ubiquinone. Couples the redox reaction to proton translocation (for every two electrons transferred, four hydrogen ions are translocated across the cytoplasmic membrane), and thus conserves the redox energy in a proton gradient. This Anaeromyxobacter sp. (strain K) protein is NADH-quinone oxidoreductase subunit B 1.